Here is a 386-residue protein sequence, read N- to C-terminus: uncharacterized protein (386 aa).

An F-box domain is found at K29 to E76.

This is an uncharacterized protein from Caenorhabditis elegans.